The sequence spans 1033 residues: Potassium-transporting ATPase alpha chain 1 (1033 aa).

Topologically, residues methionine 1–proline 96 are cytoplasmic. Phosphotyrosine occurs at positions 6 and 9. Positions glycine 14–glutamate 39 are disordered. The span at methionine 25 to lysine 38 shows a compositional bias: basic residues. Serine 26 bears the Phosphoserine mark. Residues glutamate 97–alanine 117 traverse the membrane as a helical segment. Residues alanine 118 to tyrosine 140 lie on the Lumenal side of the membrane. A helical membrane pass occupies residues leucine 141–phenylalanine 161. Residues lysine 162–isoleucine 297 lie on the Cytoplasmic side of the membrane. A helical transmembrane segment spans residues glutamate 298 to valine 317. Residues valine 318 to alanine 329 lie on the Lumenal side of the membrane. Residues methionine 330–alanine 347 traverse the membrane as a helical segment. Residues valine 338, alanine 339, valine 341, and glutamate 343 each contribute to the K(+) site. The Cytoplasmic segment spans residues threonine 348 to leucine 781. The active-site 4-aspartylphosphate intermediate is aspartate 385. Aspartate 385 and threonine 387 together coordinate Mg(2+). A phosphoserine mark is found at serine 461 and serine 599. Mg(2+) contacts are provided by aspartate 726 and aspartate 730. Residues lysine 782–isoleucine 801 traverse the membrane as a helical segment. Glutamate 795 contributes to the K(+) binding site. Over tyrosine 802–leucine 811 the chain is Lumenal. The helical transmembrane segment at glycine 812–alanine 832 threads the bilayer. A K(+)-binding site is contributed by glutamate 820. The Cytoplasmic portion of the chain corresponds to tyrosine 833–arginine 852. Residue serine 838 is modified to Phosphoserine. The chain crosses the membrane as a helical span at residues leucine 853–phenylalanine 875. At alanine 876–cysteine 927 the chain is on the lumenal side. Residues tyrosine 928–lysine 947 traverse the membrane as a helical segment. The Cytoplasmic segment spans residues threonine 948–asparagine 961. Position 952 is a phosphoserine; by PKA (serine 952). Residues arginine 962–tyrosine 980 form a helical membrane-spanning segment. The Lumenal portion of the chain corresponds to cysteine 981–phenylalanine 995. A helical transmembrane segment spans residues glutamine 996–lysine 1016. At leucine 1017–tyrosine 1033 the chain is on the cytoplasmic side.

The protein belongs to the cation transport ATPase (P-type) (TC 3.A.3) family. Type IIC subfamily. The gastric H(+)/K(+) ATPase pump is composed of the catalytic alpha subunit ATP4A and the regulatory beta subunit ATP4B. Interacts (via the P-domain) with ATP4B (via N-terminus); this interaction stabilizes the lumenal-open E2 conformation state and prevents the reverse reaction of the transport cycle.

It localises to the apical cell membrane. It carries out the reaction K(+)(out) + ATP + H2O + H(+)(in) = K(+)(in) + ADP + phosphate + 2 H(+)(out). The catalytic subunit of the gastric H(+)/K(+) ATPase pump which transports H(+) ions in exchange for K(+) ions across the apical membrane of parietal cells. Uses ATP as an energy source to pump H(+) ions to the gastric lumen while transporting K(+) ion from the lumen into the cell. Remarkably generates a million-fold proton gradient across the gastric parietal cell membrane, acidifying the gastric juice down to pH 1. Within a transport cycle, the transfer of a H(+) ion across the membrane is coupled to ATP hydrolysis and is associated with a transient phosphorylation that shifts the pump conformation from inward-facing (E1) to outward-facing state (E2). The release of the H(+) ion in the stomach lumen is followed by binding of K(+) ion converting the pump conformation back to the E1 state. The polypeptide is Potassium-transporting ATPase alpha chain 1 (Atp4a) (Rattus norvegicus (Rat)).